The primary structure comprises 102 residues: Urease subunit beta (102 aa).

This sequence belongs to the urease beta subunit family. In terms of assembly, heterotrimer of UreA (gamma), UreB (beta) and UreC (alpha) subunits. Three heterotrimers associate to form the active enzyme.

Its subcellular location is the cytoplasm. The enzyme catalyses urea + 2 H2O + H(+) = hydrogencarbonate + 2 NH4(+). It functions in the pathway nitrogen metabolism; urea degradation; CO(2) and NH(3) from urea (urease route): step 1/1. The protein is Urease subunit beta of Acinetobacter baumannii (strain ACICU).